The sequence spans 94 residues: Neutrophil defensin 1 (94 aa).

A signal peptide spans 1–19 (MRTLAILAAILLVALQAQA). The propeptide occupies 20–64 (EPLQARADEVAAAPEQIPADNPEVVVSLAWDESLAPKHPGSRKNV). 3 disulfide bridges follow: C66-C94, C68-C83, and C73-C93. R78 bears the ADP-ribosylarginine; by ART1 mark. Phosphotyrosine is present on Y85. An ADP-ribosylarginine; by ART1 modification is found at R88.

This sequence belongs to the alpha-defensin family. Tetramer. Dimer. Interacts with RETN. Post-translationally, ADP-ribosylation drastically reduces cytotoxic and antibacterial activities, and enhances IL8 production.

Its subcellular location is the secreted. Functionally, effector molecule of the innate immune system that acts via antibiotic-like properties against a broad array of infectious agents including bacteria, fungi, and viruses or by promoting the activation and maturation of some APCs. Interacts with the essential precursor of cell wall synthesis lipid II to inhibit bacterial cell wall synthesis. Inhibits adenovirus infection via inhibition of viral disassembly at the vertex region, thereby restricting the release of internal capsid protein pVI, which is required for endosomal membrane penetration during cell entry. In addition, interaction with adenovirus capsid leads to the redirection of viral particles to TLR4 thereby promoting a NLRP3-mediated inflammasome response and interleukin 1-beta (IL-1beta) release. Induces the production of proinflammatory cytokines including type I interferon (IFN) in plasmacytoid dendritic cells (pDCs) by triggering the degradation of NFKBIA and nuclear translocation of IRF1, both of which are required for activation of pDCs. The polypeptide is Neutrophil defensin 1 (DEFA1) (Pan troglodytes (Chimpanzee)).